The sequence spans 224 residues: UPF0758 protein Psyr_0222 (224 aa).

An MPN domain is found at Ala102 to Met224. The Zn(2+) site is built by His173, His175, and Asp186. A JAMM motif motif is present at residues His173–Asp186.

Belongs to the UPF0758 family.

The chain is UPF0758 protein Psyr_0222 from Pseudomonas syringae pv. syringae (strain B728a).